The sequence spans 175 residues: MPTPADDLVVIGKIVSVYGIRGEVKVYSFTDPLDNLLDYRRWTLRRDGEIRQAELVRGRLHGKVLAAKLKGLDDREEARTFTGYEICIPRSELPSLEEGEYYWHQLEGLKVIDQGGQLLGVIDHLLETGANDVMVVKPCAGSLDDRERLLPYTGQCVLSIDLAAGEMRVDWDADF.

The 78-residue stretch at 98–175 (EGEYYWHQLE…EMRVDWDADF (78 aa)) folds into the PRC barrel domain.

This sequence belongs to the RimM family. Binds ribosomal protein uS19.

Its subcellular location is the cytoplasm. In terms of biological role, an accessory protein needed during the final step in the assembly of 30S ribosomal subunit, possibly for assembly of the head region. Essential for efficient processing of 16S rRNA. May be needed both before and after RbfA during the maturation of 16S rRNA. It has affinity for free ribosomal 30S subunits but not for 70S ribosomes. The chain is Ribosome maturation factor RimM from Pseudomonas aeruginosa (strain UCBPP-PA14).